Reading from the N-terminus, the 91-residue chain is Alpha-defensin 31 (91 aa).

An N-terminal signal peptide occupies residues 1–19 (MKKLVLLFALVLLAFQVQA). A propeptide spanning residues 20–65 (DSIQNTDEETKTEEQQGEEDQAVSVSFGDPQGSGLQDAALGWGRRC) is cleaved from the precursor. The segment at 22 to 55 (IQNTDEETKTEEQQGEEDQAVSVSFGDPQGSGLQ) is disordered. 6 tandem repeats follow at residues 65 to 67 (CPR), 68 to 70 (CPP), 71 to 73 (CPR), 77 to 79 (CPR), 80 to 82 (CPT), and 83 to 85 (CPR). Positions 65–85 (CPRCPPCPRCSWCPRCPTCPR) are 6 X 3 AA tandem repeats of C-P-X.

This sequence belongs to the alpha-defensin family. In terms of tissue distribution, paneth cells of the small bowel.

The protein resides in the secreted. Apparent precursor of a secreted, cationic, proline- and cysteine-rich peptide that contains Cys-Pro-Xaa repeats. Unlike cryptdin, the proposed mature peptide region lacks the structural motif characteristic of defensins. It may have microbicidal activities. This chain is Alpha-defensin 31, found in Mus musculus (Mouse).